Consider the following 280-residue polypeptide: Fructose-1,6-bisphosphatase class 1 (280 aa).

Positions 64, 83, 85, and 86 each coordinate Mg(2+). Substrate contacts are provided by residues 86–89 (DGSS), Tyr-190, and Lys-221. Glu-227 lines the Mg(2+) pocket.

It belongs to the FBPase class 1 family. Homotetramer. It depends on Mg(2+) as a cofactor.

It is found in the cytoplasm. The enzyme catalyses beta-D-fructose 1,6-bisphosphate + H2O = beta-D-fructose 6-phosphate + phosphate. It functions in the pathway carbohydrate biosynthesis; gluconeogenesis. In Campylobacter hominis (strain ATCC BAA-381 / DSM 21671 / CCUG 45161 / LMG 19568 / NCTC 13146 / CH001A), this protein is Fructose-1,6-bisphosphatase class 1.